Here is a 610-residue protein sequence, read N- to C-terminus: Peptidyl-prolyl cis-trans isomerase 9 (610 aa).

Ser13 carries the phosphoserine modification. WD repeat units follow at residues 45–83 (MHNA…VEYI), 88–127 (AHNA…LVNI), and 177–216 (KHTA…QKPD). In terms of domain architecture, PPIase cyclophilin-type spans 453–607 (LGKAAIIHTT…EPTKIINISI (155 aa)).

Belongs to the cyclophilin-type PPIase family.

The protein localises to the nucleus. It catalyses the reaction [protein]-peptidylproline (omega=180) = [protein]-peptidylproline (omega=0). In terms of biological role, PPIases accelerate the folding of proteins. It catalyzes the cis-trans isomerization of proline imidic peptide bonds in oligopeptides. The chain is Peptidyl-prolyl cis-trans isomerase 9 (cyp9) from Schizosaccharomyces pombe (strain 972 / ATCC 24843) (Fission yeast).